Consider the following 210-residue polypeptide: Proteasome subunit beta (210 aa).

The propeptide at 1-9 (MDNDKHLKG) is removed in mature form; by autocatalysis. Threonine 10 (nucleophile) is an active-site residue.

This sequence belongs to the peptidase T1B family. The 20S proteasome core is composed of 14 alpha and 14 beta subunits that assemble into four stacked heptameric rings, resulting in a barrel-shaped structure. The two inner rings, each composed of seven catalytic beta subunits, are sandwiched by two outer rings, each composed of seven alpha subunits. The catalytic chamber with the active sites is on the inside of the barrel. Has a gated structure, the ends of the cylinder being occluded by the N-termini of the alpha-subunits. Is capped at one or both ends by the proteasome regulatory ATPase, PAN.

It localises to the cytoplasm. The enzyme catalyses Cleavage of peptide bonds with very broad specificity.. With respect to regulation, the formation of the proteasomal ATPase PAN-20S proteasome complex, via the docking of the C-termini of PAN into the intersubunit pockets in the alpha-rings, triggers opening of the gate for substrate entry. Interconversion between the open-gate and close-gate conformations leads to a dynamic regulation of the 20S proteasome proteolysis activity. Its function is as follows. Component of the proteasome core, a large protease complex with broad specificity involved in protein degradation. This is Proteasome subunit beta from Methanococcoides burtonii (strain DSM 6242 / NBRC 107633 / OCM 468 / ACE-M).